Here is a 198-residue protein sequence, read N- to C-terminus: Segregation and condensation protein B (198 aa).

The interval 168 to 198 is disordered; the sequence is KLADPATDEPDQNEMDLFFDRFNQSKEQEEE.

This sequence belongs to the ScpB family. In terms of assembly, homodimer. Homodimerization may be required to stabilize the binding of ScpA to the Smc head domains. Component of a cohesin-like complex composed of ScpA, ScpB and the Smc homodimer, in which ScpA and ScpB bind to the head domain of Smc. The presence of the three proteins is required for the association of the complex with DNA.

The protein localises to the cytoplasm. Participates in chromosomal partition during cell division. May act via the formation of a condensin-like complex containing Smc and ScpA that pull DNA away from mid-cell into both cell halves. The chain is Segregation and condensation protein B from Listeria monocytogenes serotype 4b (strain CLIP80459).